The following is a 1072-amino-acid chain: MYKTKLIPVMNEDAVIVQQTDSIQDPKVTPDDTVVDSSGDVHEAIDDDVEASSPMELDSAVTNDARVLESERSEKDGVVGSEEEDEIKSEDVLIDKDDESSEVKEEEEEEDGSDDQSSELGSEADEKELDLGLKEEKKGVSDYKSLLSEFDDYVASEKMGSGVSRALSYGFEVGDLVWGKVKSHPWWPGHIFNEAFASPSVRRMRRIDHVLVAFFGDSSYGWFDPAELIPFEPNLEEKSQQTVSKHFVRAVEEAKDEASRRSALGLTCKCRNPYNFRPSNVEDYFAVDVPDYELQAVYSVDQIKNSRDKFLPAETISFVKQLALAPQECDPDSLKFMKKKAVVFAFRKSVFEEFDETYAQAFGTKSPRSSVSTLEPHNRAPPRAPLSGPLVIAETLGDLKSSKKPTKVKVSKKKDKYLLKRRDEAGDKSVQFGEIEASSEASHIQGIDGSLDGDFGLQRRAPTLQTPMKDEKSGIVSMDFASSNTAIPGKEFSASKPSLDEEKGLAEKSKERMEERAAVLPEHGKSEAMASLKPKEEAGTDLGSAGSSLQPLLESHTSASEGKSSTGSVIKKVKVAKRSSSEMSSENPPSEPKKKKKKKKEPDSDHPVKRKNLYSGEAGAKKLSQLGSAHLQTYMEADVPQLLSHLQDLSLDPFHGLSVASFGTARKFFLRFRSLNYQKSLSVSSSDATVENARDTKPSKPVKTVKRTEDPSKAGKKRLSSDRQDEIPSAKKLKKTNQLKSMASEKKIIREAKDSIKPIREPSRVVQAKPARGQTGKKTAPSVKVVEPTMLVMKFPPGTSLPSAALLKARFGRFGLLDQSAIRVFWKSSTCRVVFLYKADAQTAFRYATGNNTLFGNVNVKYFLRDVDAPKAEPREPENTKEDDEPQSQWLDQAPPLHQPTLPPPNVNLKSCLKKPVDDPSSSSNNGNGNRAAVRVKFMLGGEENSSKANTEPPQVTMTLNRNSGPSSSSSSVPMEFVSKKFQNVVHHQQLPPSTLPPILPLPPQYTKPQQLPIKPVDHVEPPMPPSRNFRGPIPAVSAGDISHQMLNLLSKCNEVVANVTGLLGYVPYHPL.

Residues 21-133 (DSIQDPKVTP…ADEKELDLGL (113 aa)) are disordered. Positions 25 to 38 (DPKVTPDDTVVDSS) are enriched in low complexity. Basic and acidic residues predominate over residues 66-77 (RVLESERSEKDG). A compositionally biased stretch (acidic residues) spans 96-128 (KDDESSEVKEEEEEEDGSDDQSSELGSEADEKE). A PWWP domain is found at 173-234 (VGDLVWGKVK…PAELIPFEPN (62 aa)). Residues 365-387 (KSPRSSVSTLEPHNRAPPRAPLS) form a disordered region. Residues 366–375 (SPRSSVSTLE) are compositionally biased toward polar residues. The short motif at 402-409 (SKKPTKVK) is the Nuclear localization signal 1 element. 4 disordered regions span residues 486 to 619 (AIPG…GEAG), 681 to 738 (LSVS…KTNQ), 871 to 931 (KAEP…NGNR), and 944 to 973 (ENSS…SSSV). Residues 498–526 (SLDEEKGLAEKSKERMEERAAVLPEHGKS) are compositionally biased toward basic and acidic residues. Polar residues predominate over residues 545-568 (AGSSLQPLLESHTSASEGKSSTGS). 3 consecutive short sequence motifs (nuclear localization signal) follow at residues 596–603 (KKKKKEPD), 705–712 (VKRTEDPS), and 733–740 (LKKTNQLK). Residues 706–729 (KRTEDPSKAGKKRLSSDRQDEIPS) show a composition bias toward basic and acidic residues. Residues 871 to 880 (KAEPREPENT) show a composition bias toward basic and acidic residues. Pro residues predominate over residues 897-906 (LHQPTLPPPN). Positions 921 to 930 (SSSSNNGNGN) are enriched in low complexity. Residues 947-966 (SKANTEPPQVTMTLNRNSGP) are compositionally biased toward polar residues.

The protein belongs to the PDP family. In terms of assembly, interacts with MSI4/FVE. Component of the PRC2 (polycomb repressive complex 2) complex which regulates histone methylation on histone H3K27.

The protein localises to the nucleus. Its function is as follows. Together with PDP2, PDP3 and PDP6, interacts with MSI4/FVE and MSI5 to suppress FLC, MAF4 and MAF5 expression by regulating the function of the PRC2 complex and modulating H3K27me3 level, thereby promoting flowering. This is PWWP domain-containing protein 1 from Arabidopsis thaliana (Mouse-ear cress).